Here is a 185-residue protein sequence, read N- to C-terminus: Elongation factor P (185 aa).

Belongs to the elongation factor P family.

It is found in the cytoplasm. It participates in protein biosynthesis; polypeptide chain elongation. Involved in peptide bond synthesis. Stimulates efficient translation and peptide-bond synthesis on native or reconstituted 70S ribosomes in vitro. Probably functions indirectly by altering the affinity of the ribosome for aminoacyl-tRNA, thus increasing their reactivity as acceptors for peptidyl transferase. This Bacillus cereus (strain 03BB102) protein is Elongation factor P.